The chain runs to 961 residues: Retinoblastoma-like protein homolog lin-35 (961 aa).

2 disordered regions span residues 1–43 (MPKR…PPAK) and 55–129 (GGVQ…TPPP). A compositionally biased stretch (polar residues) spans 68–81 (ELTQMTIKQETEGN). The span at 107–119 (GEDDDYEEDDADS) shows a compositional bias: acidic residues. Residue Ser-714 is modified to Phosphoserine; by CDK4. Thr-719 carries the phosphothreonine; by CDK4 modification.

This sequence belongs to the retinoblastoma protein (RB) family. In terms of assembly, component of the DRM complex, at least composed of lin-9, lin-35, lin-37, lin-52, lin-53, lin-54, dpl-1 and efl-1. Interacts with lin-53. Interacts (via C-terminus) with dpl-1 (via C-terminus) and efl-1 (via C-terminus). Interacts (via C-terminus) with lin-8. Phosphorylated by the cyclin dependent kinase cdk-4. Phosphorylation inhibits the transcriptional repressor activity of lin-35 and allows for progression through the G1 phase of the cell cycle during postembryonic development.

The protein resides in the nucleus. Its function is as follows. Key regulator of cell division which acts as a transcriptional repressor and negatively regulates cell cycle progression in its active unphosphorylated form, but allows cell cycle progression when phosphorylated. When unphosphorylated and in its active form, interacts with E2F transcription factors such as efl-1 to repress their transcriptional activity and negatively regulate the progression through the G1 phase of the cell cycle during postembryonic development. May furthermore act with cell cycle regulator cki-1 to negatively regulate cell cycle progression. Acts redundantly with lin-53, fzr-1 and lin-23 to control cell cycle progression by regulating the expression of G1 phase cyclins. In particular, negatively regulates the expression of the cyclin E homolog cye-1, which is essential for the G1/S phase transition. Regulates cell division in the intestinal lineage, repressing the expression of genes such as cdc-25.2, which are required for intestinal cells to transition from the karyokinesis cell cycle (also known as nuclear division) to endoreplication, a specific growth pathway in the intestinal epithelium required for feeding and gut development in growing larvae during the L1 stage molt. Its role as a transcriptional repressor in the regulation of intestinal cell division during postembryonic development is most likely in complex with an E2F cell cycle regulatory transcription factor efl-1 and its binding partner the synthetic multivulva class B protein dpl-1. Synthetic multivulva (synMuv) class B protein. SynMuv proteins are required to repress the induction of vulval development by Ras signaling and probably act by forming the multiprotein DRM complex that represses transcription. Together with synMuv class B protein lin-53, and redundantly with synMuv class A protein lin-15A, represses transcription to control vulval development, most likely through antagonization of the Ras-signaling pathway in the major hypodermal syncytium hyp7. Acts redundantly with the transcriptional corepressor spr-1 and the zinc finger protein zfp-2 to play a role in vulval morphogenesis, promote germline proliferation and somatic gonad development. Acts redundantly with ubc-18 in the regulation of pharyngeal morphogenesis during embryonic development by negatively regulating the expression of proteins such as sup-35. Functions with the SWI/SNF complex and proteins such as pha-1 to regulate larval development. Functions redundantly with xnp-1 to regulate somatic gonad development. Acts redundantly with slr-2 to regulate the expression of intestinal genes required for nutrient utilization. Regulates transcription in response to starvation. Furthermore, in response to starvation, promotes germ cell programmed cell death by negatively regulating the expression of the anti-apoptotic protein ced-9. Conversely, in conjunction with mcd-1, efl-1 and the synthetic multivulva class B proteins dpl-1, lin-37 and lin-52, may also regulate transcription to promote programmed cell death independently of ced-1, ced-8 and ced-9 cell death pathways. Directly involved in heterochromatin formation by maintaining overall chromatin structure and, in particular, that of constitutive heterochromatin by stabilizing histone methylation. In particular, negatively regulates the expression of mes-4, a histone methyltransferase that controls the expression of germline specific genes. May play a role in double strand break formation during meiosis. May suppress sensitivity to RNAi. May play a role in the response to endoplasmic reticulum (ER) stress. This Caenorhabditis elegans protein is Retinoblastoma-like protein homolog lin-35.